The chain runs to 296 residues: MQINLITGISGSGKSVALRAFEDAGYDCVDNLPVSLLENLIQTLEGENSERVAVAIDARRGQSIAQLPSILENLRRNHQVRVVFLNADTNTLVQRFSETRRRHPLSTSAQQTQSATLIEAIDRERNLLEPLRAQAHSIDTSSLPAHALRSWIQDLLKDKPTGLTVVFESFGFKKGVPSEADLVFDVRCLPNPHYDKILRPLTGNDKPVKEFLEKIPEVISMECDIIQFIEKWLPHYIADGRSYLTVAIGCTGGQHRSVYLVNRISEHFRAQKDLIDLQLNFLDRHRELDSIPVTKL.

Residue Gly-8–Ser-15 coordinates ATP. Asp-57–Arg-60 contributes to the GTP binding site.

Belongs to the RapZ-like family.

Functionally, displays ATPase and GTPase activities. This is Nucleotide-binding protein Pnuc_1915 from Polynucleobacter asymbioticus (strain DSM 18221 / CIP 109841 / QLW-P1DMWA-1) (Polynucleobacter necessarius subsp. asymbioticus).